We begin with the raw amino-acid sequence, 339 residues long: Uracil nucleotide/cysteinyl leukotriene receptor (339 aa).

Over 1–36 (MDGLETALPSLTDNASLAYSEQCGQETPLENMLFAC) the chain is Extracellular. N-linked (GlcNAc...) asparagine glycosylation occurs at Asn14. Residues 37–57 (FYLLDFILAFVGNALALWLFI) form a helical membrane-spanning segment. At 58 to 64 (WDHKSGT) the chain is on the cytoplasmic side. Residues 65–85 (PANVFLMHLAVADLSCVLVLP) traverse the membrane as a helical segment. The Extracellular segment spans residues 86-105 (TRLVYHFSGNHWPFGEIPCR). The cysteines at positions 104 and 181 are disulfide-linked. The chain crosses the membrane as a helical span at residues 106 to 126 (LTGFLFYLNMYASIYFLTCIS). The Cytoplasmic segment spans residues 127 to 147 (ADRFLAIVHPVKSLKLRRPLY). A helical membrane pass occupies residues 148–168 (AHLACAFLWIVVAVAMAPLLV). At 169-195 (SPQTVQTNHTVVCLQLYREKASHHALA) the chain is on the extracellular side. N-linked (GlcNAc...) asparagine glycosylation is present at Asn176. The helical transmembrane segment at 196 to 216 (SLAVAFTFPFITTVTCYLLII) threads the bilayer. Topologically, residues 217–232 (RSLRQGPRIEKHLKNK) are cytoplasmic. A helical transmembrane segment spans residues 233–253 (AVRMIAMVLAIFLICFVPYHI). The Extracellular segment spans residues 254–280 (HRSVYVLHYRGGGTSCSAQRALALGNR). The chain crosses the membrane as a helical span at residues 281 to 301 (ITSCLTSLNGALDPVMYFFVA). Topologically, residues 302 to 339 (EKFRHALCNLLCSKRLTGPPPSFEGKTNESSLSARSEL) are cytoplasmic.

Belongs to the G-protein coupled receptor 1 family. As to expression, expressed in brain, kidney, and heart. Highest level in brain.

It localises to the cell membrane. In terms of biological role, dual specificity receptor for uracil nucleotides and cysteinyl leukotrienes (CysLTs). Signals through G(i) and inhibition of adenylyl cyclase. May mediate brain damage by nucleotides and CysLTs following ischemia. The protein is Uracil nucleotide/cysteinyl leukotriene receptor of Rattus norvegicus (Rat).